We begin with the raw amino-acid sequence, 1150 residues long: uncharacterized protein (1150 aa).

This sequence belongs to the TMEM1 family.

This is an uncharacterized protein from Schizosaccharomyces pombe (strain 972 / ATCC 24843) (Fission yeast).